A 446-amino-acid polypeptide reads, in one-letter code: Acyl-lipid (8-3)-desaturase (446 aa).

The Cytochrome b5 heme-binding domain maps to Gly-6–Val-82. Heme contacts are provided by His-41 and His-64. A run of 2 helical transmembrane segments spans residues Ala-125–Val-145 and Leu-150–Leu-170. Residues His-171–His-175 carry the Histidine box-1 motif. A Histidine box-2 motif is present at residues His-207 to His-212. Residues Gln-387 to His-391 carry the Histidine box-3 motif.

Belongs to the fatty acid desaturase type 1 family. Fe(2+) serves as cofactor.

It is found in the membrane. The catalysed reaction is an (8Z,11Z,14Z)-icosatrienoyl-containing glycerolipid + 2 Fe(II)-[cytochrome b5] + O2 + 2 H(+) = (5Z,8Z,11Z,14Z)-eicosatetraenoyl-containing glycerolipid + 2 Fe(III)-[cytochrome b5] + 2 H2O. The enzyme catalyses an (8Z,11Z,14Z,17Z)-eicosatetraenoyl-containing glycerolipid + 2 Fe(II)-[cytochrome b5] + O2 + 2 H(+) = a (5Z,8Z,11Z,14Z,17Z)-eicosapentaenoyl-containing glycerolipid + 2 Fe(III)-[cytochrome b5] + 2 H2O. Its function is as follows. Fatty acid desaturase that introduces a cis double bond at the 5-position in 20-carbon polyunsaturated fatty acids incorporated in a glycerolipid that contain a Delta(8) double bond. Involved in the conversion of di-homo-Delta-linolenic acid to arachidonic acid. Essential in the production of eicosanoids. The chain is Acyl-lipid (8-3)-desaturase (DES1) from Mortierella alpina (Oleaginous fungus).